The sequence spans 156 residues: Transcription antitermination protein NusB (156 aa).

It belongs to the NusB family.

Its function is as follows. Involved in transcription antitermination. Required for transcription of ribosomal RNA (rRNA) genes. Binds specifically to the boxA antiterminator sequence of the ribosomal RNA (rrn) operons. This chain is Transcription antitermination protein NusB, found in Mycobacterium bovis (strain ATCC BAA-935 / AF2122/97).